A 308-amino-acid polypeptide reads, in one-letter code: UDP-N-acetylenolpyruvoylglucosamine reductase (308 aa).

Residues 22 to 185 (RVGGPADWLF…TEATFRAEAG (164 aa)) form the FAD-binding PCMH-type domain. The active site involves Arg165. Over residues 197 to 211 (QIARRDSSQPTKERS) the composition is skewed to basic and acidic residues. The segment at 197-228 (QIARRDSSQPTKERSAGSTFRNPAGFSSTGRA) is disordered. A compositionally biased stretch (polar residues) spans 212 to 226 (AGSTFRNPAGFSSTG). The Proton donor role is filled by Ser214. Glu296 is an active-site residue.

The protein belongs to the MurB family. It depends on FAD as a cofactor.

It is found in the cytoplasm. It carries out the reaction UDP-N-acetyl-alpha-D-muramate + NADP(+) = UDP-N-acetyl-3-O-(1-carboxyvinyl)-alpha-D-glucosamine + NADPH + H(+). Its pathway is cell wall biogenesis; peptidoglycan biosynthesis. Its function is as follows. Cell wall formation. This Cereibacter sphaeroides (strain ATCC 17029 / ATH 2.4.9) (Rhodobacter sphaeroides) protein is UDP-N-acetylenolpyruvoylglucosamine reductase.